The sequence spans 244 residues: tRNA (guanine-N(1)-)-methyltransferase (244 aa).

S-adenosyl-L-methionine-binding positions include glycine 114 and 134-139 (IGDYVL). The interval 220–244 (RRPDLLEKAGASPGKSGSNFGKHDA) is disordered.

This sequence belongs to the RNA methyltransferase TrmD family. As to quaternary structure, homodimer.

The protein resides in the cytoplasm. The enzyme catalyses guanosine(37) in tRNA + S-adenosyl-L-methionine = N(1)-methylguanosine(37) in tRNA + S-adenosyl-L-homocysteine + H(+). Its function is as follows. Specifically methylates guanosine-37 in various tRNAs. This is tRNA (guanine-N(1)-)-methyltransferase from Rhizobium johnstonii (strain DSM 114642 / LMG 32736 / 3841) (Rhizobium leguminosarum bv. viciae).